The primary structure comprises 691 residues: Mediator of RNA polymerase II transcription subunit 17 (691 aa).

Positions 158–185 (KLESFDAAANKLLQSAQRLEEDIAAETK) form a coiled coil.

It belongs to the Mediator complex subunit 17 family. In terms of assembly, component of the Mediator complex.

It is found in the nucleus. Component of the Mediator complex, a coactivator involved in the regulated transcription of nearly all RNA polymerase II-dependent genes. Mediator functions as a bridge to convey information from gene-specific regulatory proteins to the basal RNA polymerase II transcription machinery. Mediator is recruited to promoters by direct interactions with regulatory proteins and serves as a scaffold for the assembly of a functional preinitiation complex with RNA polymerase II and the general transcription factors. This chain is Mediator of RNA polymerase II transcription subunit 17 (SRB4), found in Coccidioides immitis (strain RS) (Valley fever fungus).